A 527-amino-acid chain; its full sequence is Putative pumilio homolog 13 (527 aa).

The interval 22–51 (ENMTTAASSSQSQPPQMQSSKFHQPENHIH) is disordered. Positions 24-41 (MTTAASSSQSQPPQMQSS) are enriched in low complexity. One can recognise a PUM-HD domain in the interval 184-527 (GVNNSWRSNE…GNKILEKLNI (344 aa)). Pumilio repeat units lie at residues 205 to 243 (SMEN…MIFD), 244 to 279 (GLIV…LIVD), 283 to 321 (RHIS…RIMD), 322 to 357 (AISS…RLLE), 358 to 396 (VVSQ…RLIS), 397 to 432 (EVIE…LLVN), 433 to 468 (KLLR…IVVD), and 469 to 503 (LLRG…MLRY).

The protein resides in the cytoplasm. Functionally, sequence-specific RNA-binding protein that regulates translation and mRNA stability by binding the 3'-UTR of target mRNAs. The sequence is that of Putative pumilio homolog 13 (APUM13) from Arabidopsis thaliana (Mouse-ear cress).